The primary structure comprises 1241 residues: uncharacterized protein (1241 aa).

Residues 21 to 49 (ILNDNVREINIAKKEIKQLREYVGILQQN) are a coiled coil. The next 3 membrane-spanning stretches (helical) occupy residues 261 to 281 (VNAI…FVLG), 918 to 938 (AVVG…GLVA), and 947 to 967 (GHIV…VIGG). The tract at residues 1005–1028 (THIGKEDSNNGVSTSTNKRSIGKA) is disordered. Over residues 1013-1028 (NNGVSTSTNKRSIGKA) the composition is skewed to polar residues.

The protein localises to the host membrane. This is an uncharacterized protein from Diadromus pulchellus (Parasitic wasp).